We begin with the raw amino-acid sequence, 555 residues long: MKSDIEIAQEAKMLHIREVAKKLDIEEDYLEYYGKYKAKISPALSEKIKDRKDGKLILVTAITPTPAGEGKTTLTVGLGQALAKIGKKAMIALREPSLGPCMGIKGGAAGGGYSQVVPMEDINLHFTGDLHAITAAHNLLAAMIDNHIHHGNELNIDIRAITWKRAMDMNDRALREIIVGLGGKANGFPRQDGFIITVASEVMAILCLAQDLMDLKRRIGDIIVAYDKDGNPVTARDLKADGAMTVLLKDAIKPNLVQTIENVPAFVHGGPFANIAHGCNSLIATKYGLKLADYLVTEAGFGADLGAEKFFDIKSRFGGLTPNAAVIVATVRALKMHGGVKKEDLQKEDVEAVRRGIENLEKQVENVRKFGVPVVVALNRFVFDTEREIEEVRKACEEMGVDMAVAEVWEKGGEGGIELAEKVVKACETPSNFHVLYDETLPIKDKLHIIATEIYGADGVEYTASALKDIANLERLGFDKMPIVVAKTQYSLSDDPKLLGRPRGFKITVRELRVSMGAGFVVVFTGDIMTMPGLPKHPAAENIDIDENGRITGLF.

Position 65–72 (Thr-65–Thr-72) interacts with ATP.

The protein belongs to the formate--tetrahydrofolate ligase family.

The catalysed reaction is (6S)-5,6,7,8-tetrahydrofolate + formate + ATP = (6R)-10-formyltetrahydrofolate + ADP + phosphate. It participates in one-carbon metabolism; tetrahydrofolate interconversion. The sequence is that of Formate--tetrahydrofolate ligase from Thermoanaerobacter sp. (strain X514).